A 75-amino-acid polypeptide reads, in one-letter code: Small, acid-soluble spore protein Tlp (75 aa).

This sequence belongs to the Tlp family.

It localises to the spore core. This is Small, acid-soluble spore protein Tlp from Geobacillus kaustophilus (strain HTA426).